The following is a 340-amino-acid chain: UPF0324 membrane protein OB3406 (340 aa).

A run of 9 helical transmembrane segments spans residues 12–31 (SFYT…GVLC), 36–58 (LDIM…TIGL), 94–116 (GLHA…YSLA), 126–148 (SILT…APLV), 155–177 (TAVS…TMMY), 215–237 (IAIV…IGIY), 257–276 (IPWF…IGFL), 281–303 (VNLL…GLNV), and 315–337 (VFFA…IYVM).

The protein belongs to the UPF0324 family.

The protein localises to the cell membrane. The protein is UPF0324 membrane protein OB3406 of Oceanobacillus iheyensis (strain DSM 14371 / CIP 107618 / JCM 11309 / KCTC 3954 / HTE831).